Here is a 1596-residue protein sequence, read N- to C-terminus: A-kinase anchor protein SPHKAP (1596 aa).

Disordered stretches follow at residues 214-233 (KHGR…RSVS), 242-319 (ASEQ…TPKQ), 389-432 (DNSE…GHPA), 462-481 (SGEE…DQGE), and 760-809 (EQSD…SSSS). The segment covering 292–306 (TLCTSSNSQKLSRTY) has biased composition (polar residues). Acidic residues predominate over residues 462 to 479 (SGEEYECEDEEEESETDQ). The tract at residues 829 to 846 (FAEDLATTVVSMATELAA) is PKA-RII subunit binding domain. 3 disordered regions span residues 958–1022 (VVDT…ISKQ), 1282–1310 (VGER…ENSC), and 1328–1443 (VPLI…SSLG). The span at 959–971 (VDTSKSGQSSRSR) shows a compositional bias: polar residues. The span at 1333–1356 (IEPDQREEASEEKGGVETHHREAS) shows a compositional bias: basic and acidic residues. The span at 1357–1372 (HQTQQQSGKGSETATK) shows a compositional bias: polar residues. Composition is skewed to low complexity over residues 1398–1409 (LSASSEESGSGS) and 1430–1443 (LSEG…SSLG).

It belongs to the AKAP110 family.

Its subcellular location is the cytoplasm. Its function is as follows. Anchoring protein that mediates the subcellular compartmentation of cAMP-dependent protein kinase (PKA type II). This is A-kinase anchor protein SPHKAP (sphkap) from Danio rerio (Zebrafish).